Reading from the N-terminus, the 356-residue chain is 4-hydroxybenzoate polyprenyltransferase, mitochondrial (356 aa).

The N-terminal 44 residues, 1 to 44 (MITRSIGIARRSNSINCIVGSNTSTSYSLDESTKRWISTSTKQP), are a transit peptide targeting the mitochondrion. A run of 6 helical transmembrane segments spans residues 71 to 91 (VDKP…IAMA), 93 to 113 (PAGQ…AFLM), 150 to 170 (AIGL…QLNW), 195 to 215 (WPQF…WCAL), 269 to 289 (WLSA…IASD), and 332 to 352 (IILF…QILI).

This sequence belongs to the UbiA prenyltransferase family. The cofactor is Mg(2+).

The protein localises to the mitochondrion inner membrane. The catalysed reaction is an all-trans-polyprenyl diphosphate + 4-hydroxybenzoate = a 4-hydroxy-3-(all-trans-polyprenyl)benzoate + diphosphate. The protein operates within cofactor biosynthesis; ubiquinone biosynthesis. In terms of biological role, catalyzes the prenylation of para-hydroxybenzoate (PHB) with an all-trans polyprenyl group. Mediates the second step in the final reaction sequence of coenzyme Q (CoQ) biosynthesis, which is the condensation of the polyisoprenoid side chain with PHB, generating the first membrane-bound Q intermediate. The sequence is that of 4-hydroxybenzoate polyprenyltransferase, mitochondrial (coq-2) from Caenorhabditis elegans.